The sequence spans 59 residues: Single-pass membrane and coiled-coil domain-containing protein 4 (59 aa).

A disordered region spans residues 1-27; it reads MRQLKGKPKKETSRDKKERKQAMQEAR. A compositionally biased stretch (basic and acidic residues) spans 9 to 27; the sequence is KKETSRDKKERKQAMQEAR. Positions 9–31 form a coiled coil; it reads KKETSRDKKERKQAMQEARRQIT. The chain crosses the membrane as a helical span at residues 32–52; that stretch reads TVVLPTLAVVVLLIVVFVYVA.

The protein belongs to the SMCO4 family.

The protein resides in the membrane. This Bos taurus (Bovine) protein is Single-pass membrane and coiled-coil domain-containing protein 4 (SMCO4).